A 123-amino-acid chain; its full sequence is Large ribosomal subunit protein uL14 (123 aa).

This sequence belongs to the universal ribosomal protein uL14 family. Part of the 50S ribosomal subunit. Forms a cluster with proteins L3 and L19. In the 70S ribosome, L14 and L19 interact and together make contacts with the 16S rRNA in bridges B5 and B8.

In terms of biological role, binds to 23S rRNA. Forms part of two intersubunit bridges in the 70S ribosome. In Actinobacillus pleuropneumoniae serotype 7 (strain AP76), this protein is Large ribosomal subunit protein uL14.